A 486-amino-acid polypeptide reads, in one-letter code: Cardiolipin synthase A (486 aa).

2 helical membrane-spanning segments follow: residues 3-23 (TFYT…IAGV) and 38-58 (MAWL…YLSV). 2 consecutive PLD phosphodiesterase domains span residues 219–246 (MDLR…VDPR) and 399–426 (EGGL…DMRS). Catalysis depends on residues H224, K226, D231, H404, K406, and D411.

The protein belongs to the phospholipase D family. Cardiolipin synthase subfamily. ClsA sub-subfamily.

It localises to the cell inner membrane. The catalysed reaction is 2 a 1,2-diacyl-sn-glycero-3-phospho-(1'-sn-glycerol) = a cardiolipin + glycerol. Its function is as follows. Catalyzes the reversible phosphatidyl group transfer from one phosphatidylglycerol molecule to another to form cardiolipin (CL) (diphosphatidylglycerol) and glycerol. In Salmonella choleraesuis (strain SC-B67), this protein is Cardiolipin synthase A.